The primary structure comprises 148 residues: Putative pre-16S rRNA nuclease (148 aa).

It belongs to the YqgF nuclease family.

The protein localises to the cytoplasm. Functionally, could be a nuclease involved in processing of the 5'-end of pre-16S rRNA. The chain is Putative pre-16S rRNA nuclease from Chlamydia trachomatis serovar A (strain ATCC VR-571B / DSM 19440 / HAR-13).